The sequence spans 657 residues: Wall-associated receptor kinase-like 20 (657 aa).

The N-terminal stretch at 1–23 (MEKKRSYYALLIPTLLTVWLACA) is a signal peptide. At 24–293 (GHSCARHAKA…KHCKKKKKTV (270 aa)) the chain is on the extracellular side. A glycan (N-linked (GlcNAc...) asparagine) is linked at asparagine 140. The helical transmembrane segment at 294–314 (VFAGAAVAVVGVTLAIAVAVI) threads the bilayer. Over 315-657 (GTKHSHQKVK…NILSQEVTET (343 aa)) the chain is Cytoplasmic. A Protein kinase domain is found at 363–646 (FSKDNLIGTG…KEVADEIEYI (284 aa)). Residues 369-377 (IGTGGFGEV) and lysine 391 contribute to the ATP site. Aspartate 490 serves as the catalytic Proton acceptor.

Belongs to the protein kinase superfamily. Ser/Thr protein kinase family.

It is found in the membrane. It carries out the reaction L-seryl-[protein] + ATP = O-phospho-L-seryl-[protein] + ADP + H(+). The enzyme catalyses L-threonyl-[protein] + ATP = O-phospho-L-threonyl-[protein] + ADP + H(+). In terms of biological role, serine/threonine-protein kinase that may function as a signaling receptor of extracellular matrix component. This chain is Wall-associated receptor kinase-like 20 (WAKL20), found in Arabidopsis thaliana (Mouse-ear cress).